Reading from the N-terminus, the 202-residue chain is MRMAESNKLKTGIFSGSFNPVHIGHLALANYLCEYEELDEVWFMVSPQNPLKAGTELWPDDLRLRLVELATEEYPRFRSSDFEFHLPRPSYSVHTLEKLHETYPERDFYLIIGSDNWARFDRWYQSERIIKENRILIYPRPGFPVNENGLPETVRLVHSPTFEISSTFIRQALDEKKDVRYFLHPKVWEYIREYIRQSITDN.

This sequence belongs to the NadD family.

The catalysed reaction is nicotinate beta-D-ribonucleotide + ATP + H(+) = deamido-NAD(+) + diphosphate. It participates in cofactor biosynthesis; NAD(+) biosynthesis; deamido-NAD(+) from nicotinate D-ribonucleotide: step 1/1. Functionally, catalyzes the reversible adenylation of nicotinate mononucleotide (NaMN) to nicotinic acid adenine dinucleotide (NaAD). The protein is Probable nicotinate-nucleotide adenylyltransferase of Bacteroides thetaiotaomicron (strain ATCC 29148 / DSM 2079 / JCM 5827 / CCUG 10774 / NCTC 10582 / VPI-5482 / E50).